A 281-amino-acid chain; its full sequence is ATP phosphoribosyltransferase (281 aa).

Belongs to the ATP phosphoribosyltransferase family. Long subfamily. Mg(2+) is required as a cofactor.

The protein resides in the cytoplasm. It carries out the reaction 1-(5-phospho-beta-D-ribosyl)-ATP + diphosphate = 5-phospho-alpha-D-ribose 1-diphosphate + ATP. Its pathway is amino-acid biosynthesis; L-histidine biosynthesis; L-histidine from 5-phospho-alpha-D-ribose 1-diphosphate: step 1/9. Feedback inhibited by histidine. Its function is as follows. Catalyzes the condensation of ATP and 5-phosphoribose 1-diphosphate to form N'-(5'-phosphoribosyl)-ATP (PR-ATP). Has a crucial role in the pathway because the rate of histidine biosynthesis seems to be controlled primarily by regulation of HisG enzymatic activity. The chain is ATP phosphoribosyltransferase from Corynebacterium jeikeium (strain K411).